Consider the following 517-residue polypeptide: Protein disulfide-isomerase A5 (517 aa).

An N-terminal signal peptide occupies residues methionine 1 to serine 21. 4 cysteine pairs are disulfide-bonded: cysteine 83–cysteine 92, cysteine 180–cysteine 183, cysteine 303–cysteine 306, and cysteine 424–cysteine 427. Thioredoxin domains are found at residues phenylalanine 132–proline 259, proline 268–alanine 382, and tryptophan 376–glutamate 504. Residues arginine 514–leucine 517 carry the Prevents secretion from ER motif.

This sequence belongs to the protein disulfide isomerase family. In terms of assembly, interacts with CALR (via P-domain).

It localises to the endoplasmic reticulum lumen. It catalyses the reaction Catalyzes the rearrangement of -S-S- bonds in proteins.. This Mus musculus (Mouse) protein is Protein disulfide-isomerase A5 (Pdia5).